The sequence spans 263 residues: Phosphonoacetaldehyde hydrolase (263 aa).

D10 serves as the catalytic Nucleophile. Mg(2+) contacts are provided by D10 and A12. K51 functions as the Schiff-base intermediate with substrate in the catalytic mechanism. D184 lines the Mg(2+) pocket.

The protein belongs to the HAD-like hydrolase superfamily. PhnX family. In terms of assembly, homodimer. Mg(2+) serves as cofactor.

The enzyme catalyses phosphonoacetaldehyde + H2O = acetaldehyde + phosphate + H(+). In terms of biological role, involved in phosphonate degradation. The polypeptide is Phosphonoacetaldehyde hydrolase (Bacteroides fragilis (strain ATCC 25285 / DSM 2151 / CCUG 4856 / JCM 11019 / LMG 10263 / NCTC 9343 / Onslow / VPI 2553 / EN-2)).